Consider the following 256-residue polypeptide: Type III pantothenate kinase (256 aa).

7 to 14 (DIGNTNVV) lines the ATP pocket. Position 108 to 111 (108 to 111 (GADC)) interacts with substrate. Asp-110 functions as the Proton acceptor in the catalytic mechanism. Asp-130 contacts K(+). ATP is bound at residue Thr-133. Thr-185 is a substrate binding site.

Belongs to the type III pantothenate kinase family. In terms of assembly, homodimer. The cofactor is NH4(+). Requires K(+) as cofactor.

The protein localises to the cytoplasm. It carries out the reaction (R)-pantothenate + ATP = (R)-4'-phosphopantothenate + ADP + H(+). It participates in cofactor biosynthesis; coenzyme A biosynthesis; CoA from (R)-pantothenate: step 1/5. Its function is as follows. Catalyzes the phosphorylation of pantothenate (Pan), the first step in CoA biosynthesis. The protein is Type III pantothenate kinase of Bifidobacterium adolescentis (strain ATCC 15703 / DSM 20083 / NCTC 11814 / E194a).